The sequence spans 271 residues: Aquaporin-11 (271 aa).

Over 1–14 (MSALLGLPPEVQDT) the chain is Cytoplasmic. Residues 15–35 (CISLGLMLLVVLFMGLARVIA) form a helical membrane-spanning segment. Over 36–41 (RQQLHR) the chain is Lumenal. A helical transmembrane segment spans residues 42–62 (PMVHAFVLEFLATFQLCYCTH). Residues 63–76 (ELQLLSEQDSGHPT) lie on the Cytoplasmic side of the membrane. The chain crosses the membrane as a helical span at residues 77–97 (WTLTLIYFFSLVHGLTLVGTA). Over 98-166 (SNPCGVMMQM…NPINTDISKA (69 aa)) the chain is Lumenal. The short motif at 99–101 (NPC) is the NPC element. The helical transmembrane segment at 167-187 (IIIEAICSFIFHSALLHFQEV) threads the bilayer. Topologically, residues 188–194 (RTKLRIH) are cytoplasmic. Residues 195–215 (VLAALITFLAYAGGSLTGALF) traverse the membrane as a helical segment. Residues 216–218 (NPA) carry the NPA motif. Residues 216 to 234 (NPALALSLHFPCFDESFYK) lie on the Lumenal side of the membrane. A helical transmembrane segment spans residues 235 to 255 (FFVVYWVAPSLGVLLMILMFS). The Cytoplasmic segment spans residues 256–271 (FFLPWLHNNQLSNKKE).

Belongs to the MIP/aquaporin (TC 1.A.8) family. AQP11/AQP12 subfamily. As to quaternary structure, homodimer; disulfide-linked. Homotetramer. Can also form homomultimer. Not glycosylated. Expressed in retina specifically at retinal Mueller glial cells. Expressed in adult testis, in the elongated spermatids (ES) and in residual bodies inside Sertoli cells.

The protein resides in the endoplasmic reticulum membrane. Its subcellular location is the cytoplasmic vesicle membrane. It is found in the cell membrane. It carries out the reaction H2O(in) = H2O(out). The enzyme catalyses glycerol(in) = glycerol(out). The catalysed reaction is H2O2(out) = H2O2(in). Channel protein that facilitates the transport of water, glycerol and hydrogen peroxide across membrane of cell or organelles guaranteeing intracellular homeostasis in several organes like liver, kidney and brain. In situation of stress, participates in endoplasmic reticulum (ER) homeostasis by regulating redox homeostasis through the transport of hydrogen peroxide across the endoplasmic reticulum membrane thereby regulating the oxidative stress through the NADPH oxidase 2 pathway. Plays a role by maintaining an environment suitable for translation or protein foldings in the ER lumen namely by participating in the PKD1 glycosylation processing resulting in regulation of PKD1 membrane trafficking thereby preventing the accumulation of unfolding protein in ER. Plays a role in the proximal tubule function by regulating its endosomal acidification. May play a role in postnatal kidney development. The sequence is that of Aquaporin-11 from Rattus norvegicus (Rat).